The following is a 241-amino-acid chain: 3-deoxy-manno-octulosonate cytidylyltransferase (241 aa).

It belongs to the KdsB family.

It localises to the cytoplasm. The enzyme catalyses 3-deoxy-alpha-D-manno-oct-2-ulosonate + CTP = CMP-3-deoxy-beta-D-manno-octulosonate + diphosphate. The protein operates within nucleotide-sugar biosynthesis; CMP-3-deoxy-D-manno-octulosonate biosynthesis; CMP-3-deoxy-D-manno-octulosonate from 3-deoxy-D-manno-octulosonate and CTP: step 1/1. Its pathway is bacterial outer membrane biogenesis; lipopolysaccharide biosynthesis. Its function is as follows. Activates KDO (a required 8-carbon sugar) for incorporation into bacterial lipopolysaccharide in Gram-negative bacteria. In Rickettsia rickettsii (strain Sheila Smith), this protein is 3-deoxy-manno-octulosonate cytidylyltransferase.